Here is a 342-residue protein sequence, read N- to C-terminus: N-acetyl-gamma-glutamyl-phosphate reductase (342 aa).

Residue C149 is part of the active site.

The protein belongs to the NAGSA dehydrogenase family. Type 1 subfamily.

Its subcellular location is the cytoplasm. The enzyme catalyses N-acetyl-L-glutamate 5-semialdehyde + phosphate + NADP(+) = N-acetyl-L-glutamyl 5-phosphate + NADPH + H(+). It participates in amino-acid biosynthesis; L-arginine biosynthesis; N(2)-acetyl-L-ornithine from L-glutamate: step 3/4. In terms of biological role, catalyzes the NADPH-dependent reduction of N-acetyl-5-glutamyl phosphate to yield N-acetyl-L-glutamate 5-semialdehyde. This chain is N-acetyl-gamma-glutamyl-phosphate reductase, found in Roseobacter denitrificans (strain ATCC 33942 / OCh 114) (Erythrobacter sp. (strain OCh 114)).